We begin with the raw amino-acid sequence, 395 residues long: Innexin inx3 (395 aa).

The Cytoplasmic segment spans residues 1-37 (MAVFGMVSAVSGFIKIRYLLDKAVIDNMVFRCHYRIT). The chain crosses the membrane as a helical span at residues 38–58 (TAILFTCCIIVTANNLIGDPI). Residues 59–114 (SCINDGAIPMHVINTFCWITYTYTIPGQQHRQIGTDVAGPGLGNEYGQEKRYHSYY) are Extracellular-facing. The chain crosses the membrane as a helical span at residues 115–135 (QWVPFVLFFQGLMFYVPHWVW). At 136–183 (KNMEDGKIRMITDGLRGMVSVPDDYRRDRQDRILKYFVNSLNTHNGYS) the chain is on the cytoplasmic side. The chain crosses the membrane as a helical span at residues 184–204 (FAYFFCELLNFINVIVNIFMV). Over 205–272 (DKFLGGAFMS…VLALNILNEK (68 aa)) the chain is Extracellular. A helical membrane pass occupies residues 273–293 (IYIFLWFWFIILATISGVAVL). Over 294–395 (YSLVVIMMPT…TFGGGKETET (102 aa)) the chain is Cytoplasmic. Phosphoserine is present on residues Ser-366 and Ser-377. Tyr-381 bears the Phosphotyrosine mark.

This sequence belongs to the pannexin family. In terms of assembly, heterooligomer of Inx2 (via cytoplasmic C-terminal region) and Inx3 (via cytoplasmic C-terminal region). In terms of tissue distribution, in ovary, expressed in nurse cells and follicle cells. Expressed in embryonic epithelial cells. Ubiquitously expressed in stage 5 embryos. Expressed in foregut and hindgut from stage 11-17 and in proventriculus, epidermis and CNS in stage 16 embryos (at protein level). Expressed in anterior and ventral regions in stage 8 embryos. Repeating epidermal pattern emerges at stage 11, refines to one or two cells at each side of the segment borders by stage 13. Expressed in the imaginal wing disk. In pupae, expressed in the CNS and in secondary and tertiary pigment cells of the retina.

It is found in the cell membrane. The protein localises to the cell junction. Its subcellular location is the gap junction. It localises to the cytoplasm. The protein resides in the lateral cell membrane. It is found in the apicolateral cell membrane. Functionally, structural components of the gap junctions. Essential for proper epithelial development of the epidermis. This is Innexin inx3 (Inx3) from Drosophila melanogaster (Fruit fly).